A 1358-amino-acid chain; its full sequence is MGADGETVVLKNMLIGINLILLGSMIKPSECQLEVTTERVQRQSVEEEGGIANYNTSSKEQPVVFNHVYNINVPLDNLCSSGLEASAEQEVSAEDETLAEYMGQTSDHESQVTFTHRINFPKKACPCASSAQVLQELLSRIEMLEREVSVLRDQCNANCCQESAATGQLDYIPHCSGHGNFSFESCGCICNEGWFGKNCSEPYCPLGCSSRGVCVDGQCICDSEYSGDDCSELRCPTDCSSRGLCVDGECVCEEPYTGEDCRELRCPGDCSGKGRCANGTCLCEEGYVGEDCGQRQCLNACSGRGQCEEGLCVCEEGYQGPDCSAVAPPEDLRVAGISDRSIELEWDGPMAVTEYVISYQPTALGGLQLQQRVPGDWSGVTITELEPGLTYNISVYAVISNILSLPITAKVATHLSTPQGLQFKTITETTVEVQWEPFSFSFDGWEISFIPKNNEGGVIAQVPSDVTSFNQTGLKPGEEYIVNVVALKEQARSPPTSASVSTVIDGPTQILVRDVSDTVAFVEWIPPRAKVDFILLKYGLVGGEGGRTTFRLQPPLSQYSVQALRPGSRYEVSVSAVRGTNESDSATTQFTTEIDAPKNLRVGSRTATSLDLEWDNSEAEVQEYKVVYSTLAGEQYHEVLVPRGIGPTTRATLTDLVPGTEYGVGISAVMNSQQSVPATMNARTELDSPRDLMVTASSETSISLIWTKASGPIDHYRITFTPSSGIASEVTVPKDRTSYTLTDLEPGAEYIISVTAERGRQQSLESTVDAFTGFRPISHLHFSHVTSSSVNITWSDPSPPADRLILNYSPRDEEEEMMEVSLDATKRHAVLMGLQPATEYIVNLVAVHGTVTSEPIVGSITTGIDPPKDITISNVTKDSVMVSWSPPVASFDYYRVSYRPTQVGRLDSSVVPNTVTEFTITRLNPATEYEISLNSVRGREESERICTLVHTAMDNPVDLIATNITPTEALLQWKAPVGEVENYVIVLTHFAVAGETILVDGVSEEFRLVDLLPSTHYTATMYATNGPLTSGTISTNFSTLLDPPANLTASEVTRQSALISWQPPRAEIENYVLTYKSTDGSRKELIVDAEDTWIRLEGLLENTDYTVLLQAAQDTTWSSITSTAFTTGGRVFPHPQDCAQHLMNGDTLSGVYPIFLNGELSQKLQVYCDMTTDGGGWIVFQRRQNGQTDFFRKWADYRVGFGNVEDEFWLGLDNIHRITSQGRYELRVDMRDGQEAAFASYDRFSVEDSRNLYKLRIGSYNGTAGDSLSYHQGRPFSTEDRDNDVAVTNCAMSYKGAWWYKNCHRTNLNGKYGESRHSQGINWYHWKGHEFSIPFVEMKMRPYNHRLMAGRKRQSLQF.

The first 31 residues, Met-1–Cys-31, serve as a signal peptide directing secretion. O-linked (GalNAc...) threonine glycosylation is found at Thr-36 and Thr-37. An N-linked (GlcNAc...) asparagine glycan is attached at Asn-55. The stretch at Cys-127 to Ala-157 forms a coiled coil. Ser-176 is a glycosylation site (O-linked (Xyl...) (chondroitin sulfate) serine). 2 N-linked (GlcNAc...) asparagine glycosylation sites follow: Asn-180 and Asn-198. EGF-like domains lie at Cys-188–Cys-199, Cys-219–Cys-230, and Cys-250–Cys-261. A glycan (O-linked (Xyl...) (chondroitin sulfate) serine) is linked at Ser-271. A glycan (N-linked (GlcNAc...) asparagine) is linked at Asn-278. The region spanning Cys-281–Cys-292 is the EGF-like 4 domain. 3 disulfides stabilise this stretch: Cys-292-Cys-301, Cys-297-Cys-312, and Cys-314-Cys-323. O-linked (Xyl...) (chondroitin sulfate) serine glycosylation is present at Ser-302. An EGF-like 5 domain is found at Cys-312–Cys-323. Fibronectin type-III domains lie at Pro-328–Gly-420, Leu-421–Asp-505, Gly-506–Asp-595, Ala-596–Asp-687, Ser-688–Ile-777, Ser-778–Asp-865, Pro-866–Asn-955, Pro-956–Asp-1042, and Pro-1043–Arg-1130. N-linked (GlcNAc...) asparagine glycans are attached at residues Asn-392, Asn-470, and Asn-581. A Phosphoserine modification is found at Ser-724. N-linked (GlcNAc...) asparagine glycans are attached at residues Asn-791, Asn-874, Asn-1036, Asn-1046, and Asn-1261. The Fibrinogen C-terminal domain maps to Gly-1129 to Asn-1344.

This sequence belongs to the tenascin family. Forms oligomers. Interacts with CNTN1, TNC, and FN1. Interacts with BCAN and ACAN in a calcium-dependent manner. Interacts with SCN2B, PTPRZ1, and CSPG3. Contains N-linked oligosaccharides, O-linked sialylated structures and O-linked chondroitin sulfate glycosaminoglycans. Contains N-linked oligosaccharides with a sulfated carbohydrate structure. O-glycosylated on Thr-36 or Thr-37 with a core 1 or possibly core 8 glycan. Brain specific.

It localises to the secreted. The protein resides in the extracellular space. The protein localises to the extracellular matrix. In terms of biological role, neural extracellular matrix (ECM) protein involved in interactions with different cells and matrix components. These interactions can influence cellular behavior by either evoking a stable adhesion and differentiation, or repulsion and inhibition of neurite growth. Binding to cell surface gangliosides inhibits RGD-dependent integrin-mediated cell adhesion and results in an inhibition of PTK2/FAK1 (FAK) phosphorylation and cell detachment. Binding to membrane surface sulfatides results in a oligodendrocyte adhesion and differentiation. Interaction with CNTN1 induces a repulsion of neurons and an inhibition of neurite outgrowth. Interacts with SCN2B may play a crucial role in clustering and regulation of activity of sodium channels at nodes of Ranvier. TNR-linked chondroitin sulfate glycosaminoglycans are involved in the interaction with FN1 and mediate inhibition of cell adhesion and neurite outgrowth. The highly regulated addition of sulfated carbohydrate structure may modulate the adhesive properties of TNR over the course of development and during synapse maintenance. This chain is Tenascin-R (TNR), found in Homo sapiens (Human).